We begin with the raw amino-acid sequence, 117 residues long: MPRAKGGFKSRQRRNKVLKLAKGYRGARSKLFRSATEAVDRALNYAFRDRRVKKRDFRSLWIMRINAASRLNGLSYSKFIFGLKKADVQIDRKVLADIAITDPKGFAEISAVAKAQL.

This sequence belongs to the bacterial ribosomal protein bL20 family.

Functionally, binds directly to 23S ribosomal RNA and is necessary for the in vitro assembly process of the 50S ribosomal subunit. It is not involved in the protein synthesizing functions of that subunit. The sequence is that of Large ribosomal subunit protein bL20 from Trichlorobacter lovleyi (strain ATCC BAA-1151 / DSM 17278 / SZ) (Geobacter lovleyi).